The sequence spans 96 residues: 5-hydroxytryptamine receptor 2B (96 aa).

Topologically, residues 1 to 8 (CNQSTLQM) are extracellular. Asparagine 2 is a glycosylation site (N-linked (GlcNAc...) asparagine). A helical transmembrane segment spans residues 9–30 (LLEIFVWIGYVSSGVNPLVYTL). The short motif at 24-28 (NPLVY) is the NPxxY motif; important for ligand-induced conformation changes and signaling element. Over 31 to 96 (FNKTFRDAFG…STMYQSPVRL (66 aa)) the chain is Cytoplasmic. Cysteine 45 is lipidated: S-palmitoyl cysteine.

It belongs to the G-protein coupled receptor 1 family. As to quaternary structure, interacts (via C-terminus) with MPDZ.

The protein resides in the cell membrane. It is found in the synapse. It localises to the synaptosome. G-protein coupled receptor for 5-hydroxytryptamine (serotonin). Also functions as a receptor for various ergot alkaloid derivatives and psychoactive substances. Ligand binding causes a conformation change that triggers signaling via guanine nucleotide-binding proteins (G proteins) and modulates the activity of downstream effectors. HTR2B is coupled to G(q)/G(11) G alpha proteins and activates phospholipase C-beta, releasing diacylglycerol (DAG) and inositol 1,4,5-trisphosphate (IP3) second messengers that modulate the activity of phosphatidylinositol 3-kinase and promote the release of Ca(2+) ions from intracellular stores, respectively. Beta-arrestin family members inhibit signaling via G proteins and mediate activation of alternative signaling pathways. Plays a role in the regulation of dopamine and 5-hydroxytryptamine release, 5-hydroxytryptamine uptake and in the regulation of extracellular dopamine and 5-hydroxytryptamine levels, and thereby affects neural activity. May play a role in the perception of pain. Plays a role in the regulation of behavior, including impulsive behavior. Required for normal proliferation of embryonic cardiac myocytes and normal heart development. Protects cardiomyocytes against apoptosis. Plays a role in the adaptation of pulmonary arteries to chronic hypoxia. Plays a role in vasoconstriction. Required for normal osteoblast function and proliferation, and for maintaining normal bone density. Required for normal proliferation of the interstitial cells of Cajal in the intestine. The chain is 5-hydroxytryptamine receptor 2B (HTR2B) from Cavia porcellus (Guinea pig).